We begin with the raw amino-acid sequence, 253 residues long: CD151 antigen (253 aa).

Over 1-18 (MGEFNEKKATCGTVCLKY) the chain is Cytoplasmic. 2 S-palmitoyl cysteine lipidation sites follow: Cys-11 and Cys-15. A helical transmembrane segment spans residues 19-39 (LLFTYNCCFWLAGLAVMAVGI). The Extracellular segment spans residues 40-57 (WTLALKSDYISLLASSTY). Residues 58-78 (LATAYILVVAGVVVMVTGVLG) traverse the membrane as a helical segment. The Cytoplasmic segment spans residues 79-91 (CCATFKERRNLLR). Residues 92 to 112 (LYFILLLIIFLLEIIAGILAY) traverse the membrane as a helical segment. Over 113 to 221 (VYYQQLNTEL…LESFIQEHLR (109 aa)) the chain is Extracellular. An N-linked (GlcNAc...) asparagine glycan is attached at Asn-159. A helical membrane pass occupies residues 222–242 (VIGAVGIGIACVQVFGMIFTC). Residues Cys-242 and Cys-243 are each lipidated (S-palmitoyl cysteine). At 243–253 (CLYRSLKLEHY) the chain is on the cytoplasmic side.

Belongs to the tetraspanin (TM4SF) family. Interacts with integrins ITGA3:ITGB1, ITGA5:ITGB1, ITGA3:ITGB1 and ITGA6:ITGB4 and with CD9 and CD181. Interacts (via the second extracellular domain) with integrin ITGAV:ITGB3. Interacts with ITGA3; this interaction modulates ITGA3 glycosylation pattern. Interacts with F11R. Interacts with RAC1 and CDC42; these interactions mediate physical association of RAC1 and CDC42 with integrin adhesion receptor complexes. Post-translationally, palmitoylated. Palmitoylation by ZDHHC2 regulates CD151 expression, association with other tetraspanin family proteins and function in cell adhesion. In terms of processing, ubiquitinated by RNF128 on lysine residues present in the tetraspanin amino terminus via 'Lys-48'-linked ubiquitin leading to proteasomal degradation.

It localises to the cell membrane. In terms of biological role, structural component of specialized membrane microdomains known as tetraspanin-enriched microdomains (TERMs), which act as platforms for receptor clustering and signaling. Plays a role in various cellular and molecular mechanism through its association with both integrin and non-integrin proteins. These interactions facilitate critical cellular functions, including cell-to-cell communication, wound healing, platelet aggregation, trafficking, cell motility, and angiogenesis. Via interaction with JAM-A/F11R and integrin ITGA3:ITGB1, promotes the recruitment of signaling molecules such as RAC1, CDC42 and RhoGTPases to facilitate the polarization of epithelial cells and the reorganization of the actin cytoskeleton, which are critical steps in cell migration process. Regulates the glycosylation pattern of ITGA3:ITGB1 thereby modulating its activity. Plays an essential role in the maintenance of central laminin-binding integrin ITGA6:ITGB4-containing adhesion complexes. Essential for the proper assembly of the glomerular and tubular basement membranes in kidney. Contributes to T-cell activation by modulating integrin signaling leading to activation of downstream targets PTK2 and MAPK1/MAPK3. In Rattus norvegicus (Rat), this protein is CD151 antigen (Cd151).